Consider the following 522-residue polypeptide: Sorting nexin-1 (522 aa).

The tract at residues 1-142 (MASGGGGCSA…ELEEEEQEDQ (142 aa)) is disordered. Phosphoserine is present on residues Ser-32 and Ser-39. Positions 35–45 (EAGDSDTEGED) are enriched in acidic residues. Thr-41 and Thr-48 each carry phosphothreonine. The span at 55–65 (KPQSPKKTTSL) shows a compositional bias: polar residues. A phosphoserine mark is found at Ser-58 and Ser-72. Residues 71 to 80 (GSKENGIHEE) show a composition bias toward basic and acidic residues. A compositionally biased stretch (polar residues) spans 98 to 107 (LDSTQNNQKT). Residues 132–142 (EELEEEEQEDQ) show a composition bias toward acidic residues. Positions 143-272 (FDLTVGITDP…EFLEKEELPR (130 aa)) constitute a PX domain. 3 residues coordinate a 1,2-diacyl-sn-glycero-3-phospho-(1D-myo-inositol-3-phosphate): Arg-186, Ser-188, and Lys-214. The residue at position 188 (Ser-188) is a Phosphoserine. Residue Lys-237 is modified to N6-acetyllysine. A 1,2-diacyl-sn-glycero-3-phospho-(1D-myo-inositol-3-phosphate) is bound at residue Arg-238. Position 280 is a phosphoserine (Ser-280). The interval 281-298 (GAGLLKMFNKATDAVSKM) is membrane-binding amphipathic helix. Residues 302–522 (MNESDIWFEE…AFLPEARAIS (221 aa)) form the BAR domain.

It belongs to the sorting nexin family. In terms of assembly, predominantly forms heterodimers with BAR domain-containing sorting nexins SNX5, SNX6 and SNX32; can self-associate to form homodimers. The heterodimers are proposed to self-assemble into helical arrays on the membrane to stabilize and expand local membrane curvature underlying endosomal tubule formation. Thought to be a component of the originally described retromer complex (also called SNX-BAR retromer) which is a pentamer containing the heterotrimeric retromer cargo-selective complex (CSC), also described as vacuolar protein sorting subcomplex (VPS) and a heterodimeric membrane-deforming subcomplex formed between SNX1 or SNX2 and SNX5 or SNX6 (also called SNX-BAR subcomplex); the respective CSC and SNX-BAR subcomplexes associate with low affinity. Interacts with SNX5, SNX6, SNX32, VPS26A, VPS29, VPS35, DRD5, DENND5A, KALRN, RHOG (GDP-bound form). The interaction with SNX2 is reported controversially. Interacts with DNAJC13; prevented by presence of HGS. Interacts with HGS.

The protein localises to the endosome membrane. It localises to the golgi apparatus. The protein resides in the trans-Golgi network membrane. Its subcellular location is the early endosome membrane. It is found in the cell projection. The protein localises to the lamellipodium. Involved in several stages of intracellular trafficking. Interacts with membranes containing phosphatidylinositol 3-phosphate (PtdIns(3P)) or phosphatidylinositol 3,5-bisphosphate (PtdIns(3,5)P2). Acts in part as component of the retromer membrane-deforming SNX-BAR subcomplex. The SNX-BAR retromer mediates retrograde transport of cargo proteins from endosomes to the trans-Golgi network (TGN) and is involved in endosome-to-plasma membrane transport for cargo protein recycling. The SNX-BAR subcomplex functions to deform the donor membrane into a tubular profile called endosome-to-TGN transport carrier (ETC). Can sense membrane curvature and has in vitro vesicle-to-membrane remodeling activity. Involved in retrograde endosome-to-TGN transport of lysosomal enzyme receptors (IGF2R, M6PR and SORT1). Plays a role in targeting ligand-activated EGFR to the lysosomes for degradation after endocytosis from the cell surface and release from the Golgi. Involvement in retromer-independent endocytic trafficking of P2RY1 and lysosomal degradation of protease-activated receptor-1/F2R. Promotes KALRN- and RHOG-dependent but retromer-independent membrane remodeling such as lamellipodium formation; the function is dependent on GEF activity of KALRN. Required for endocytosis of DRD5 upon agonist stimulation but not for basal receptor trafficking. The polypeptide is Sorting nexin-1 (Snx1) (Rattus norvegicus (Rat)).